The sequence spans 1030 residues: Toll-like receptor 9 (1030 aa).

Positions 1 to 24 are cleaved as a signal peptide; the sequence is MGPRCTLHPLSLLVQVTALAAALA. The Extracellular portion of the chain corresponds to 25–816; it reads QGRLPAFLPC…LCLDETLSWN (792 aa). Cys-34 and Cys-44 are disulfide-bonded. 46-50 is a binding site for DNA; sequence WLFLK. LRR repeat units follow at residues 61–84, 86–109, 121–146, 149–165, 166–189, 197–220, 222–241, 242–267, 282–305, 307–331, 332–355, 362–385, 389–412, 414–439, 469–493, 495–518, 519–542, 544–571, 573–597, 599–621, 626–649, 651–674, 675–698, 700–722, 723–746, and 748–771; these read RANV…DFVH, SSLR…HFPC, VPTL…SLVS, LSRT…LTGL, HALR…ALEV, LGNL…LPPS, ETLL…DLAN, LTAL…CREC, LSRL…WFRG, DRLQ…AFQG, LARL…HLHL, LRSL…TLQP, LPML…IFGA, PGLL…TREV, CKAF…MFAR, SRLE…QFVP, LTSL…SFTE, PRLE…SFVA, LPAL…LCSA, LCAL…LYLR, LRSL…ALDN, PKSL…SLTL, LPKL…SLPS, TQLR…FFAL, AKQL…WFGS, and VGNL…TFVG. Asn-63 carries N-linked (GlcNAc...) asparagine glycosylation. DNA is bound by residues 71-76 and 94-108; these read SNRIHH and KWNC…MHFP. An intrachain disulfide couples Cys-97 to Cys-109. Asn-128 carries an N-linked (GlcNAc...) asparagine glycan. DNA is bound by residues Tyr-131, Arg-151, and 178 to 180; that span reads YYK. Residues Cys-177 and Cys-183 are joined by a disulfide bond. Asn-199 carries N-linked (GlcNAc...) asparagine glycosylation. Tyr-207 is a DNA binding site. N-linked (GlcNAc...) asparagine glycosylation is found at Asn-209 and Asn-241. 2 cysteine pairs are disulfide-bonded: Cys-254–Cys-267 and Cys-257–Cys-264. The S-palmitoyl cysteine moiety is linked to residue Cys-257. Residue Arg-261 participates in DNA binding. Cys-264 carries the S-palmitoyl cysteine lipid modification. A glycan (N-linked (GlcNAc...) asparagine) is linked at Asn-339. Cys-469 and Cys-499 are joined by a disulfide. A glycan (N-linked (GlcNAc...) asparagine) is linked at Asn-512. N-linked (GlcNAc...) asparagine glycosylation is present at Asn-566. N-linked (GlcNAc...) asparagine glycans are attached at residues Asn-668 and Asn-693. An N-linked (GlcNAc...) asparagine glycan is attached at Asn-730. Intrachain disulfides connect Cys-763/Cys-789 and Cys-765/Cys-808. The helical transmembrane segment at 817–837 threads the bilayer; that stretch reads CFGISLLAMALGLVVPMLHHL. Topologically, residues 838–1030 are cytoplasmic; sequence CGWDLWYCFH…NFCRGPTTAE (193 aa). One can recognise a TIR domain in the interval 865 to 1010; it reads LFYDAFVVFD…SFWAQLGTAL (146 aa).

It belongs to the Toll-like receptor family. In terms of assembly, monomer and homodimer. Exists as a monomer in the absence of unmethylated cytidine-phosphate-guanosine (CpG) ligand. Proteolytic processing of an insertion loop (Z-loop) is required for homodimerization upon binding to the unmethylated CpG ligand leading to its activation. Interacts with MYD88 via their respective TIR domains. Interacts with BTK. Interacts (via transmembrane domain) with UNC93B1. Interacts with CD300LH; the interaction may promote full activation of TLR9-triggered innate responses. Interacts with CNPY3 and HSP90B1; this interaction is required for proper folding in the endoplasmic reticulum. Interacts with SMPDL3B. Interacts with CD82; this interaction is essential for TLR9-dependent myddosome formation in response to CpG stimulation. Activated by proteolytic cleavage of the flexible loop between repeats LRR14 and LRR15 within the ectodomain. Cleavage requires UNC93B1. Proteolytically processed by first removing the majority of the ectodomain by either asparagine endopeptidase (AEP) or a cathepsin followed by a trimming event that is solely cathepsin mediated and required for optimal receptor signaling. Post-translationally, palmitoylated by ZDHHC3 in the Golgi regulates TLR9 trafficking from the Golgi to endosomes. Depalmitoylation by PPT1 controls the release of TLR9 from UNC93B1 in endosomes.

The protein resides in the endoplasmic reticulum membrane. It is found in the endosome. It localises to the lysosome. The protein localises to the cytoplasmic vesicle. Its subcellular location is the phagosome. Functionally, key component of innate and adaptive immunity. TLRs (Toll-like receptors) control host immune response against pathogens through recognition of molecular patterns specific to microorganisms. TLR9 is a nucleotide-sensing TLR which is activated by unmethylated cytidine-phosphate-guanosine (CpG) dinucleotides. Acts via MYD88 and TRAF6, leading to NF-kappa-B activation, cytokine secretion and the inflammatory response. Upon CpG stimulation, induces B-cell proliferation, activation, survival and antibody production. In Sus scrofa (Pig), this protein is Toll-like receptor 9 (TLR9).